The sequence spans 285 residues: UPF0354 protein MW1686 (285 aa).

The protein belongs to the UPF0354 family.

The chain is UPF0354 protein MW1686 from Staphylococcus aureus (strain MW2).